A 628-amino-acid polypeptide reads, in one-letter code: MGDLPGSTGGGSGPAAAGNASGNSSSAGNTGLGVAGTTGVDRPPSPARLSHTSEKHPKVTLTELNMLRRHRELCDVVLNVGGRKIFAHRVILSACSSYFCAMFTGELEESRQTEVTIRDIDENAMELLIDFCYTAHIIVEESNVQTLLPAACLLQLVEIQDICCEFLKRQLDPTNCLGIRAFADTHSCRELLRIADKFTQHNFQEVMESEEFLLLPVGQLVDIICSDELNVRSEEQVFNAVMSWLKYNVAERRQHLAQVLQHVRLPLLSPKFLVGTVGSDLLVRSDEACRDLVDEAKNYLLLPQERPLMQGPRTRPRKPTRRGEVLFAVGGWCSGDAIASVERFDPQTNDWKMVAPMSKRRCGVGVAVLNDLLYAVGGHDGQSYLNSIERYDPQTNQWSCDVAPTTSCRTSVGVAVLDGFLYAVGGQDGVQCLNHVERYDPKENKWSKVAPMTTRRLGVAVAVLGGFLYAIGGSDGQCPLNTVERYDPRQNKWVAVSPMSTRRKHLGCAVFNNYIYAVGGRDDCMELSSAERYNPLTNTWSPIVAMTSRRSGVGLAVVNGQLYAVGGFDGSAYLKTIEVYDPETNQWRLCGCMNYRRLGGGVGVMRAPQTENYMWCENSLKQHNNPPS.

Residues 1 to 56 (MGDLPGSTGGGSGPAAAGNASGNSSSAGNTGLGVAGTTGVDRPPSPARLSHTSEKH) form a disordered region. A compositionally biased stretch (low complexity) spans 14–29 (PAAAGNASGNSSSAGN). A BTB domain is found at 74–141 (CDVVLNVGGR…CYTAHIIVEE (68 aa)). The 103-residue stretch at 176–278 (CLGIRAFADT…SPKFLVGTVG (103 aa)) folds into the BACK domain. 6 Kelch repeats span residues 325–371 (VLFA…VLND), 373–419 (LYAV…VLDG), 420–466 (FLYA…VLGG), 468–513 (LYAI…VFNN), 515–560 (IYAV…VVNG), and 561–607 (QLYA…VMRA).

The protein operates within protein modification; protein ubiquitination. Its function is as follows. Probable substrate-specific adapter of an E3 ubiquitin-protein ligase complex which mediates the ubiquitination and subsequent proteasomal degradation of target proteins. May have a role in synapse differentiation and growth. This Drosophila persimilis (Fruit fly) protein is Kelch-like protein diablo.